Consider the following 872-residue polypeptide: Probable cation-transporting P-type ATPase (872 aa).

The Cytoplasmic portion of the chain corresponds to 1 to 41 (MNKWTGLSAAAVLESRAQHGANLIPTKKLTPFWLLFLEQFK). The chain crosses the membrane as a helical span at residues 42 to 62 (SLVVILLLVATILSLVVAIIS). The Extracellular segment spans residues 63 to 79 (GVNANWLFDHNLVIEWT). Residues 80 to 100 (QPFVILITVLANSLIGSIQEF) form a helical membrane-spanning segment. The Cytoplasmic segment spans residues 101–237 (KAQKSAHTLK…TKLSPLQQKL (137 aa)). The chain crosses the membrane as a helical span at residues 238-257 (EKVGKWFSWFGLGLFVVVFL). The Extracellular portion of the chain corresponds to 258-275 (VQLGLLGFHNFSANWSIA). The helical transmembrane segment at 276-293 (LIGAIALVVAIIPEGLVT) threads the bilayer. Residues 294–642 (FINVIFALSV…EQGRKTFLTC (349 aa)) are Cytoplasmic-facing. The active-site 4-aspartylphosphate intermediate is Asp331. 2 residues coordinate Mg(2+): Asp587 and Asp591. The helical transmembrane segment at 643–662 (KRVLFNLFLTSIAGTIVVLL) threads the bilayer. The Extracellular portion of the chain corresponds to 663–685 (GLFVLGEVFREQLSKANHNFQVF). The helical transmembrane segment at 686–706 (TPTQLLIINLFVHGFPAVALA) threads the bilayer. At 707–724 (IQPVQEKLMLKPFSTKNL) the chain is on the cytoplasmic side. A helical membrane pass occupies residues 725 to 747 (FYNRGGFDLIWQSLLLSFLTLLF). The Extracellular portion of the chain corresponds to 748–768 (YSLGMVYAINDPELGKSGDLI). The helical transmembrane segment at 769 to 788 (NRAGATCGFMVLGGSAALNS) threads the bilayer. Topologically, residues 789 to 801 (LNLMVDRPLVATN) are cytoplasmic. A helical membrane pass occupies residues 802-824 (PKHYGIVWLGALSSIFVFLLIIF). Over 825 to 842 (INPLGLVFSTLKDLTAHP) the chain is Extracellular. Residues 843-863 (VLIGYSFGGVLLYMTINEVVK) form a helical membrane-spanning segment. Over 864–872 (LIRLSYGSV) the chain is Cytoplasmic.

This sequence belongs to the cation transport ATPase (P-type) (TC 3.A.3) family. Type II subfamily.

It localises to the cell membrane. It catalyses the reaction ATP + H2O = ADP + phosphate + H(+). In terms of biological role, could mediate calcium influx. In Mycoplasma pneumoniae (strain ATCC 29342 / M129 / Subtype 1) (Mycoplasmoides pneumoniae), this protein is Probable cation-transporting P-type ATPase (pacL).